Reading from the N-terminus, the 340-residue chain is HTH-type transcriptional repressor PurR (340 aa).

Residues 2–56 form the HTH lacI-type domain; sequence ATIKDVAKLVGVSTTTVSHVINKTRFVAEDTTKAVWEAIASLNYSPSAVARSLKV. The H-T-H motif DNA-binding region spans 4 to 23; the sequence is IKDVAKLVGVSTTTVSHVIN. A DNA-binding region spans residues 48-56; that stretch reads SAVARSLKV. Hypoxanthine is bound by residues Tyr-73, Lys-188, Thr-190, Phe-219, and Asp-273.

Homodimer.

Its pathway is purine metabolism; purine nucleotide biosynthesis [regulation]. Its function is as follows. Is the main repressor of the genes involved in the de novo synthesis of purine nucleotides, regulating purB, purC, purEK, purF, purHD, purL, purMN and guaBA expression. PurR is allosterically activated to bind its cognate DNA by binding the purine corepressors, hypoxanthine or guanine, thereby effecting transcription repression. This is HTH-type transcriptional repressor PurR from Glaesserella parasuis serovar 5 (strain SH0165) (Haemophilus parasuis).